A 438-amino-acid chain; its full sequence is POU domain, class 3, transcription factor 3-A (438 aa).

Disordered stretches follow at residues 22–43, 102–172, and 186–248; these read VHSE…SVSG, SPWS…QSQQ, and GMLN…PTSD. Polar residues-rich tracts occupy residues 103–123 and 146–159; these read PWSS…VKSS and QSHQ…TASH. Residues 160-172 show a composition bias toward low complexity; that stretch reads ISTITGGQQQSQQ. A compositionally biased stretch (basic residues) spans 210 to 230; it reads HHHHHHHQQQHPHHHHHHQHH. The region spanning 242–316 is the POU-specific domain; that stretch reads EDTPTSDDLE…LLNKWLEEAD (75 aa). Positions 334-393 form a DNA-binding region, homeobox; the sequence is KRKKRTSIEVSVKGALESHFLKCPKPSAQEITSLADNLQLEKEVVRVWFCNRRQKEKRMT.

This sequence belongs to the POU transcription factor family. Class-3 subfamily. Predominantly expressed in the embryonic and adult central nervous system. In adults, isoform 2 is expressed in the brain, ovary, basal cells of the skin and muscle satellite cells.

It is found in the nucleus. Its function is as follows. Transcription factor that may play important roles in patterning the embryonic brain. The chain is POU domain, class 3, transcription factor 3-A (pou3f3a) from Danio rerio (Zebrafish).